A 511-amino-acid polypeptide reads, in one-letter code: Glucans biosynthesis protein G (511 aa).

The N-terminal stretch at 1–22 is a signal peptide; it reads MMKMRWLSAAVMLTLYTSSSWA.

It belongs to the OpgD/OpgG family.

It is found in the periplasm. It participates in glycan metabolism; osmoregulated periplasmic glucan (OPG) biosynthesis. In terms of biological role, involved in the biosynthesis of osmoregulated periplasmic glucans (OPGs). The sequence is that of Glucans biosynthesis protein G from Escherichia fergusonii (strain ATCC 35469 / DSM 13698 / CCUG 18766 / IAM 14443 / JCM 21226 / LMG 7866 / NBRC 102419 / NCTC 12128 / CDC 0568-73).